Here is a 171-residue protein sequence, read N- to C-terminus: Shikimate kinase (171 aa).

11–16 (GTGKTT) is a binding site for ATP. Residue Thr-15 participates in Mg(2+) binding. Substrate is bound by residues Asp-33, Arg-57, and Gly-79. Arg-117 contacts ATP. Arg-136 contributes to the substrate binding site.

It belongs to the shikimate kinase family. In terms of assembly, monomer. Mg(2+) serves as cofactor.

It is found in the cytoplasm. It carries out the reaction shikimate + ATP = 3-phosphoshikimate + ADP + H(+). Its pathway is metabolic intermediate biosynthesis; chorismate biosynthesis; chorismate from D-erythrose 4-phosphate and phosphoenolpyruvate: step 5/7. Catalyzes the specific phosphorylation of the 3-hydroxyl group of shikimic acid using ATP as a cosubstrate. The sequence is that of Shikimate kinase from Caldanaerobacter subterraneus subsp. tengcongensis (strain DSM 15242 / JCM 11007 / NBRC 100824 / MB4) (Thermoanaerobacter tengcongensis).